The following is a 225-amino-acid chain: Small ribosomal subunit protein uS3 (225 aa).

The KH type-2 domain occupies Leu38–Arg106.

It belongs to the universal ribosomal protein uS3 family. Part of the 30S ribosomal subunit. Forms a tight complex with proteins S10 and S14.

Binds the lower part of the 30S subunit head. Binds mRNA in the 70S ribosome, positioning it for translation. The sequence is that of Small ribosomal subunit protein uS3 from Gluconobacter oxydans (strain 621H) (Gluconobacter suboxydans).